The sequence spans 255 residues: 4-hydroxy-tetrahydrodipicolinate reductase (255 aa).

Residues 13-18 (GCNGKM), 90-92 (CTT), and 114-117 (SANM) contribute to the NAD(+) site. His-147 acts as the Proton donor/acceptor in catalysis. His-148 serves as a coordination point for (S)-2,3,4,5-tetrahydrodipicolinate. Lys-151 (proton donor) is an active-site residue. 157-158 (GT) contributes to the (S)-2,3,4,5-tetrahydrodipicolinate binding site.

It belongs to the DapB family.

The protein localises to the cytoplasm. It catalyses the reaction (S)-2,3,4,5-tetrahydrodipicolinate + NAD(+) + H2O = (2S,4S)-4-hydroxy-2,3,4,5-tetrahydrodipicolinate + NADH + H(+). It carries out the reaction (S)-2,3,4,5-tetrahydrodipicolinate + NADP(+) + H2O = (2S,4S)-4-hydroxy-2,3,4,5-tetrahydrodipicolinate + NADPH + H(+). It functions in the pathway amino-acid biosynthesis; L-lysine biosynthesis via DAP pathway; (S)-tetrahydrodipicolinate from L-aspartate: step 4/4. Functionally, catalyzes the conversion of 4-hydroxy-tetrahydrodipicolinate (HTPA) to tetrahydrodipicolinate. This Clostridium tetani (strain Massachusetts / E88) protein is 4-hydroxy-tetrahydrodipicolinate reductase.